The sequence spans 224 residues: Biosynthetic peptidoglycan transglycosylase (224 aa).

The chain crosses the membrane as a helical span at residues 9-29; the sequence is VLILVSFVLLIQLWIFCSLAW.

Belongs to the glycosyltransferase 51 family.

The protein localises to the cell inner membrane. It carries out the reaction [GlcNAc-(1-&gt;4)-Mur2Ac(oyl-L-Ala-gamma-D-Glu-L-Lys-D-Ala-D-Ala)](n)-di-trans,octa-cis-undecaprenyl diphosphate + beta-D-GlcNAc-(1-&gt;4)-Mur2Ac(oyl-L-Ala-gamma-D-Glu-L-Lys-D-Ala-D-Ala)-di-trans,octa-cis-undecaprenyl diphosphate = [GlcNAc-(1-&gt;4)-Mur2Ac(oyl-L-Ala-gamma-D-Glu-L-Lys-D-Ala-D-Ala)](n+1)-di-trans,octa-cis-undecaprenyl diphosphate + di-trans,octa-cis-undecaprenyl diphosphate + H(+). Its pathway is cell wall biogenesis; peptidoglycan biosynthesis. Its function is as follows. Peptidoglycan polymerase that catalyzes glycan chain elongation from lipid-linked precursors. In Acinetobacter baylyi (strain ATCC 33305 / BD413 / ADP1), this protein is Biosynthetic peptidoglycan transglycosylase.